The chain runs to 276 residues: Undecaprenyl-diphosphatase (276 aa).

6 helical membrane-spanning segments follow: residues 43–63, 85–105, 109–129, 183–203, 218–238, and 254–274; these read RAMA…VWEF, LNLL…ADTI, LFNA…MLWA, AATE…AVYS, VFAI…RGLL, and IAFG…WASA.

This sequence belongs to the UppP family.

It localises to the cell inner membrane. It catalyses the reaction di-trans,octa-cis-undecaprenyl diphosphate + H2O = di-trans,octa-cis-undecaprenyl phosphate + phosphate + H(+). Catalyzes the dephosphorylation of undecaprenyl diphosphate (UPP). Confers resistance to bacitracin. The chain is Undecaprenyl-diphosphatase from Pseudomonas syringae pv. syringae (strain B728a).